A 378-amino-acid polypeptide reads, in one-letter code: N-acetyldiaminopimelate deacetylase (378 aa).

Residue aspartate 65 is part of the active site. The Proton acceptor role is filled by glutamate 124.

The protein belongs to the peptidase M20A family. N-acetyldiaminopimelate deacetylase subfamily.

The enzyme catalyses N-acetyl-(2S,6S)-2,6-diaminopimelate + H2O = (2S,6S)-2,6-diaminopimelate + acetate. It functions in the pathway amino-acid biosynthesis; L-lysine biosynthesis via DAP pathway; LL-2,6-diaminopimelate from (S)-tetrahydrodipicolinate (acetylase route): step 3/3. In terms of biological role, catalyzes the conversion of N-acetyl-diaminopimelate to diaminopimelate and acetate. The protein is N-acetyldiaminopimelate deacetylase of Anoxybacillus flavithermus (strain DSM 21510 / WK1).